The primary structure comprises 506 residues: D-alanine--D-alanyl carrier protein ligase (506 aa).

ATP is bound at residue 152–153 (TS). Residue Asp-197 participates in D-alanine binding. 292-297 (NTYGPT) provides a ligand contact to ATP. Val-301 contacts D-alanine. ATP-binding positions include Asp-383, 395–398 (YRGR), and Lys-494. Lys-494 contributes to the D-alanine binding site.

This sequence belongs to the ATP-dependent AMP-binding enzyme family. DltA subfamily.

The protein resides in the cytoplasm. The enzyme catalyses holo-[D-alanyl-carrier protein] + D-alanine + ATP = D-alanyl-[D-alanyl-carrier protein] + AMP + diphosphate. The protein operates within cell wall biogenesis; lipoteichoic acid biosynthesis. Its function is as follows. Catalyzes the first step in the D-alanylation of lipoteichoic acid (LTA), the activation of D-alanine and its transfer onto the D-alanyl carrier protein (Dcp) DltC. In an ATP-dependent two-step reaction, forms a high energy D-alanyl-AMP intermediate, followed by transfer of the D-alanyl residue as a thiol ester to the phosphopantheinyl prosthetic group of the Dcp. D-alanylation of LTA plays an important role in modulating the properties of the cell wall in Gram-positive bacteria, influencing the net charge of the cell wall. The polypeptide is D-alanine--D-alanyl carrier protein ligase (Lacticaseibacillus casei (strain BL23) (Lactobacillus casei)).